The sequence spans 151 residues: UPF0756 membrane protein lhv_0995 (151 aa).

The next 5 helical transmembrane spans lie at 4-24 (WLFL…SLII), 25-45 (ATGV…LPVI), 52-72 (WGVT…QIGF), 78-98 (TFKS…AILS), and 115-135 (LVLG…GPVI).

This sequence belongs to the UPF0756 family.

The protein localises to the cell membrane. In Lactobacillus helveticus (strain DPC 4571), this protein is UPF0756 membrane protein lhv_0995.